The following is a 502-amino-acid chain: MSGFEDGFSAEKLFSQGYSYTYDDVIFLPHFIDFSTDAVSLSTRLSKRVPLSIPCVASPMDTVSESHMAAAMAALGGIGIVHYNCDIDTQASVIRHAKSLQVPIASDAVFKCPEHQIGSVDDFGPSSFVFVSQTGTLTPKLLGYVSKSEWSSMKDDQKEVKIYDYMKSCENKDYYVPWDIDLDKIEAVLEDKQKGFVVLEKEGETVNVVTKDDVERVKGYPKLGSGTVGADKKWMVGAAIGTRESDKERLEHLVKAGANVVVLDSSQGNSIYQLEMIKYVKNTYPELDVVGGNVVTMYQAENLIKAGVDGLRVGMGSGSICTTQEVCAVGRGQATAVYKVSTLAAQHGVPVIADGGISNSGHIVKALVLGASTVMMGSFLAGSTEAPGAYEYRNGRRVKKYRGMGSLEAMTKGSDQRYLGDTAKLKIAQGVVGAVADKGSVLKFIPYTMHAVKQGFQDLGASSLQSAHELLRDNTLRLEARTGAAQIEGGIHGLVSYEKKSF.

Ser-2 carries the N-acetylserine modification. In terms of domain architecture, CBS spans 166–225 (MKSCENKDYYVPWDIDLDKIEAVLEDKQKGFVVLEKEGETVNVVTKDDVERVKGYPKLGS). Residues 264 to 266 (DSS) and 314 to 316 (GMG) each bind NAD(+). K(+)-binding residues include Gly-316 and Gly-318. Ser-319 contributes to the IMP binding site. Cys-321 serves as a coordination point for K(+). Cys-321 acts as the Thioimidate intermediate in catalysis. IMP-binding positions include 354 to 356 (DGG), 377 to 378 (GS), and 401 to 405 (YRGMG). Arg-417 serves as the catalytic Proton acceptor. Gln-429 lines the IMP pocket. K(+) contacts are provided by Glu-488, Gly-489, and Gly-490.

Belongs to the IMPDH/GMPR family. In terms of assembly, homotetramer. The cofactor is K(+).

It is found in the cytoplasm. The catalysed reaction is IMP + NAD(+) + H2O = XMP + NADH + H(+). It functions in the pathway purine metabolism; XMP biosynthesis via de novo pathway; XMP from IMP: step 1/1. Mycophenolic acid (MPA) is a non-competitive inhibitor that prevents formation of the closed enzyme conformation by binding to the same site as the amobile flap. In contrast, mizoribine monophosphate (MZP) is a competitive inhibitor that induces the closed conformation. MPA is a potent inhibitor of mammalian IMPDHs but a poor inhibitor of the bacterial enzymes. MZP is a more potent inhibitor of bacterial IMPDH. In terms of biological role, catalyzes the conversion of inosine 5'-phosphate (IMP) to xanthosine 5'-phosphate (XMP), the first committed and rate-limiting step in the de novo synthesis of guanine nucleotides, and therefore plays an important role in the regulation of cell growth. This is Inosine-5'-monophosphate dehydrogenase 2 from Arabidopsis thaliana (Mouse-ear cress).